The sequence spans 203 residues: Short chain dehydrogenase/reductase dpmpH (203 aa).

3 residues coordinate NADP(+): aspartate 23, tyrosine 77, and lysine 81. The Proton acceptor role is filled by tyrosine 77. The active-site Lowers pKa of active site Tyr is lysine 81.

This sequence belongs to the short-chain dehydrogenases/reductases (SDR) family.

Its pathway is secondary metabolite biosynthesis; terpenoid biosynthesis. Functionally, short chain dehydrogenase/reductase; part of the gene cluster that mediates the biosynthesis of diterpenoid pyrones. The first step of the pathway is the synthesis of the alpha-pyrone moiety by the polyketide synthase dpmpA via condensation of one acetyl-CoA starter unit with 3 malonyl-CoA units and 2 methylations. The alpha-pyrone is then combined with geranylgeranyl pyrophosphate (GGPP) formed by the GGPP synthase dpmpD through the action of the prenyltransferase dpmpC to yield a linear alpha-pyrone diterpenoid. Subsequent steps in the diterpenoid pyrone biosynthetic pathway involve the decalin core formation, which is initiated by the epoxidation of the C10-C11 olefin by the FAD-dependent oxidoreductase dpmpE, and is followed by a cyclization cascade catalyzed by the terpene cyclase dpmpB. The short chain dehydrogenase/reductase dpmpG then oxidizes the 8S hydroxy group to a ketone and the short chain dehydrogenase/reductase dpmpH reduces the ketone to the 8R hydroxy group to yield higginsianin B. Higginsianin B is further methylated by the methyltransferase dpmpI to produce the intermediate named FDDP B. The cytochrome P450 monooxygenase dpmpJ then oxidizes the C-26 methyl to primary alcohol, producing the final diterpenoid pyrone with a C-26 primary alcohol on the gamma-pyrone moiety named FDDP C. This Macrophomina phaseolina (strain MS6) (Charcoal rot fungus) protein is Short chain dehydrogenase/reductase dpmpH.